The sequence spans 341 residues: ATP-dependent 6-phosphofructokinase 2 (341 aa).

Residues Gly-10, 72–73 (RL), and 102–105 (GEGT) each bind ATP. Glu-103 is a Mg(2+) binding site. Substrate-binding positions include 125-127 (TID), Arg-162, 169-171 (MGR), Glu-222, Lys-266, and 272-275 (HVQR). Asp-127 serves as the catalytic Proton acceptor.

The protein belongs to the phosphofructokinase type A (PFKA) family. Mixed-substrate PFK group III subfamily. Homodimer or homotetramer. Mg(2+) is required as a cofactor.

It localises to the cytoplasm. It catalyses the reaction beta-D-fructose 6-phosphate + ATP = beta-D-fructose 1,6-bisphosphate + ADP + H(+). It participates in carbohydrate degradation; glycolysis; D-glyceraldehyde 3-phosphate and glycerone phosphate from D-glucose: step 3/4. Allosterically inhibited by phosphoenolpyruvate. In terms of biological role, catalyzes the phosphorylation of D-fructose 6-phosphate to fructose 1,6-bisphosphate by ATP, the first committing step of glycolysis. This chain is ATP-dependent 6-phosphofructokinase 2, found in Streptomyces coelicolor (strain ATCC BAA-471 / A3(2) / M145).